The following is an 89-amino-acid chain: Small ribosomal subunit protein uS15 (89 aa).

This sequence belongs to the universal ribosomal protein uS15 family. In terms of assembly, part of the 30S ribosomal subunit. Forms a bridge to the 50S subunit in the 70S ribosome, contacting the 23S rRNA.

In terms of biological role, one of the primary rRNA binding proteins, it binds directly to 16S rRNA where it helps nucleate assembly of the platform of the 30S subunit by binding and bridging several RNA helices of the 16S rRNA. Its function is as follows. Forms an intersubunit bridge (bridge B4) with the 23S rRNA of the 50S subunit in the ribosome. The sequence is that of Small ribosomal subunit protein uS15 from Desulforapulum autotrophicum (strain ATCC 43914 / DSM 3382 / VKM B-1955 / HRM2) (Desulfobacterium autotrophicum).